A 585-amino-acid polypeptide reads, in one-letter code: Clathrin heavy chain linker domain-containing protein 1 (585 aa).

Positions 118 to 239 form a coiled coil; it reads QLEAKMRIID…DLRFRHQRLQ (122 aa).

The sequence is that of Clathrin heavy chain linker domain-containing protein 1 (Clhc1) from Rattus norvegicus (Rat).